Here is a 77-residue protein sequence, read N- to C-terminus: ATP synthase subunit 9, mitochondrial (77 aa).

A run of 2 helical transmembrane segments spans residues 8-28 and 45-72; these read MGAG…GNVL and LFGY…LISF.

It belongs to the ATPase C chain family. F-type ATPases have 2 components, CF(1) - the catalytic core - and CF(0) - the membrane proton channel. CF(1) has five subunits: alpha(3), beta(3), gamma(1), delta(1), epsilon(1). CF(0) has three main subunits: a, b and c.

The protein localises to the mitochondrion membrane. This protein is one of the chains of the nonenzymatic membrane component (F0) of mitochondrial ATPase. This chain is ATP synthase subunit 9, mitochondrial (ATP9), found in Petunia sp. (Petunia).